The chain runs to 228 residues: Endo-1,4-beta-xylanase B (228 aa).

The N-terminal stretch at Met1–Ala19 is a signal peptide. In terms of domain architecture, GH11 spans Lys37–Ser227. Glu122 serves as the catalytic Nucleophile. Glu214 functions as the Proton donor in the catalytic mechanism.

This sequence belongs to the glycosyl hydrolase 11 (cellulase G) family.

The protein localises to the secreted. It catalyses the reaction Endohydrolysis of (1-&gt;4)-beta-D-xylosidic linkages in xylans.. Its pathway is glycan degradation; xylan degradation. Its activity is regulated as follows. Inhibited by the proteinaceous endoxylanase inhibitor I from T.aestivum (TAXI-I). Its function is as follows. Endo-1,4-beta-xylanase involved in the hydrolysis of xylan, a major structural heterogeneous polysaccharide found in plant biomass representing the second most abundant polysaccharide in the biosphere, after cellulose. Plays an important role in causing fusarium head blight (FHB) on cereal crops. Induces cell death and hydrogen peroxide accumulation in infected wheat leaves. In Gibberella zeae (strain ATCC MYA-4620 / CBS 123657 / FGSC 9075 / NRRL 31084 / PH-1) (Wheat head blight fungus), this protein is Endo-1,4-beta-xylanase B (XYLB).